Consider the following 330-residue polypeptide: MNTDNPKSHISRIAYPAIIVFLILTLLGSLVERFHPFTSWLTPPVALLMGLAYALIFGSTHRRANKLGSKVLLQYSVVGLGFGMNLGESLASGRDGMMFTIISVFGTLLLGWFIGRKILQMNRNTSALISAGTAICGGSAIAAVGPILKAEEHEMSVALGTVFLLNAVALFIFPSIGHWLALDQQQFGTWAAIAIHDTSSVVGAGSAYGEEALRVATTIKLTRALWIVPLTLVFSFVYKTKGAKRFPVPLFILFFIGAIILNTYLLEAYFPEVGRFVASLARKGLTLSLFFIGASLTKEVIASVGVRALLQGLFLWILISVGSLAFILLI.

9 consecutive transmembrane segments (helical) span residues 13–31, 36–58, 71–93, 97–114, 126–148, 158–180, 248–270, 285–307, and 312–329; these read IAYPAIIVFLILTLLGSLV, PFTSWLTPPVALLMGLAYALIFG, VLLQYSVVGLGFGMNLGESLASG, MMFTIISVFGTLLLGWFI, SALISAGTAICGGSAIAAVGPIL, ALGTVFLLNAVALFIFPSIGHWL, VPLFILFFIGAIILNTYLLEAYF, LTLSLFFIGASLTKEVIASVGVR, and GLFLWILISVGSLAFILL.

This sequence belongs to the UPF0324 family.

Its subcellular location is the cell membrane. This chain is UPF0324 membrane protein PG_2004, found in Porphyromonas gingivalis (strain ATCC BAA-308 / W83).